The chain runs to 368 residues: UPF0284 protein SYNPCC7002_A1742 (368 aa).

Belongs to the UPF0284 family.

The sequence is that of UPF0284 protein SYNPCC7002_A1742 from Picosynechococcus sp. (strain ATCC 27264 / PCC 7002 / PR-6) (Agmenellum quadruplicatum).